The chain runs to 523 residues: Maintenance of mitochondrial morphology protein 1 (523 aa).

Topologically, residues 1-43 are lumenal; it reads MAGSTSASLQTPYFPSSTQINPVRVDHTLPLPPSQPSLSFTQG. A helical transmembrane segment spans residues 44 to 64; that stretch reads LLVGQLSVVLLIGAFIKFFIF. The Cytoplasmic segment spans residues 65-523; the sequence is GEAPPPPSRG…GSMPDTVTET (459 aa). 5 disordered regions span residues 70–118, 128–147, 295–349, 420–474, and 492–523; these read PPSR…SSST, YYSATPTHPTPKHGRPRLYH, TSDQ…SKHG, RTGL…DRGL, and GGHQNQSGRDGGRGGNEQFAMPGSMPDTVTET. 2 stretches are compositionally biased toward polar residues: residues 74–96 and 105–118; these read GLSNRTSTHPRSYSINAASTDSS and STSNILRPVPSSST. A compositionally biased stretch (basic residues) spans 137 to 147; the sequence is TPKHGRPRLYH. An SMP-LTD domain is found at 151–412; sequence QPESLDWFNV…EPRVQVVGLP (262 aa). Polar residues predominate over residues 295 to 312; the sequence is TSDQTMSPIPTPHDTTSE. The span at 449–468 shows a compositional bias: gly residues; it reads GVSGGGGSGGGSGGGGGGMR.

It belongs to the MMM1 family. Homodimer. Component of the ER-mitochondria encounter structure (ERMES) or MDM complex, composed of MMM1, MDM10, MDM12 and MDM34. An MMM1 homodimer associates with one molecule of MDM12 on each side in a pairwise head-to-tail manner, and the SMP-LTD domains of MMM1 and MDM12 generate a continuous hydrophobic tunnel for phospholipid trafficking.

The protein resides in the endoplasmic reticulum membrane. Component of the ERMES/MDM complex, which serves as a molecular tether to connect the endoplasmic reticulum (ER) and mitochondria. Components of this complex are involved in the control of mitochondrial shape and protein biogenesis, and function in nonvesicular lipid trafficking between the ER and mitochondria. The MDM12-MMM1 subcomplex functions in the major beta-barrel assembly pathway that is responsible for biogenesis of all outer membrane beta-barrel proteins, and acts in a late step after the SAM complex. The MDM10-MDM12-MMM1 subcomplex further acts in the TOM40-specific pathway after the action of the MDM12-MMM1 complex. Essential for establishing and maintaining the structure of mitochondria and maintenance of mtDNA nucleoids. This chain is Maintenance of mitochondrial morphology protein 1, found in Paracoccidioides lutzii (strain ATCC MYA-826 / Pb01) (Paracoccidioides brasiliensis).